The primary structure comprises 1057 residues: Probable E3 ubiquitin-protein ligase HERC4 (1057 aa).

7 RCC1 repeats span residues 1 to 51 (MLCW…FVLD), 52 to 101 (DGTV…ALND), 102 to 154 (KGQV…ALSK), 156 to 207 (SEVF…VLTL), 208 to 259 (SGAI…ALTK), 261 to 311 (GGVF…AFVP), and 313 to 366 (SGRI…CVKR). The 328-residue stretch at 730–1057 (KNIDYKKPLK…IDHNEGFSLI (328 aa)) folds into the HECT domain. The Glycyl thioester intermediate role is filled by C1025.

It localises to the cytoplasm. It is found in the cytosol. The catalysed reaction is S-ubiquitinyl-[E2 ubiquitin-conjugating enzyme]-L-cysteine + [acceptor protein]-L-lysine = [E2 ubiquitin-conjugating enzyme]-L-cysteine + N(6)-ubiquitinyl-[acceptor protein]-L-lysine.. The protein operates within protein modification; protein ubiquitination. In terms of biological role, probable E3 ubiquitin-protein ligase involved in either protein trafficking or in the distribution of cellular structures. Required for spermatozoon maturation and fertility, and for the removal of the cytoplasmic droplet of the spermatozoon. E3 ubiquitin-protein ligases accept ubiquitin from an E2 ubiquitin-conjugating enzyme in the form of a thioester and then directly transfer it to targeted substrates. The protein is Probable E3 ubiquitin-protein ligase HERC4 (Herc4) of Rattus norvegicus (Rat).